The chain runs to 423 residues: Ferrochelatase, mitochondrial (423 aa).

A mitochondrion-targeting transit peptide spans 1 to 29 (MISRKIISTINSKTFYNKSLSYCTVNNNK). Residue cysteine 173 coordinates [2Fe-2S] cluster. Catalysis depends on residues histidine 207 and aspartate 380. 3 residues coordinate [2Fe-2S] cluster: cysteine 401, cysteine 404, and cysteine 411.

This sequence belongs to the ferrochelatase family. Monomer. [2Fe-2S] cluster serves as cofactor.

It is found in the mitochondrion inner membrane. It catalyses the reaction heme b + 2 H(+) = protoporphyrin IX + Fe(2+). It functions in the pathway porphyrin-containing compound metabolism; protoheme biosynthesis; protoheme from protoporphyrin-IX: step 1/1. In terms of biological role, catalyzes the ferrous insertion into protoporphyrin IX. This Dictyostelium discoideum (Social amoeba) protein is Ferrochelatase, mitochondrial (hemH).